A 536-amino-acid chain; its full sequence is Potassium voltage-gated channel protein shk-1 (536 aa).

2 disordered regions span residues 1–31 (MRFG…NKEK) and 87–131 (AAEM…HPYT). At 1 to 275 (MRFGGQRRCI…EYPDSSLSAR (275 aa)) the chain is on the cytoplasmic side. Positions 116–131 (QRGTPDTSSTQGHPYT) are enriched in polar residues. The chain crosses the membrane as a helical span at residues 276-296 (IIAFISIAVIALSIISFCWET). Over 297 to 322 (VPSDIEEKPINNSATAELLDEMDEKH) the chain is Extracellular. A helical transmembrane segment spans residues 323–343 (YSPFFWIELMCILWFTIELIL). Over 344–356 (RFISCPCKVTFAT) the chain is Cytoplasmic. The chain crosses the membrane as a helical span at residues 357 to 377 (SVLNIIDFVAIAPFFVNFFFA). Topologically, residues 378–425 (DTSKSNSSMSFAVLRVLRLVRVFRVFKLSRHSVGLQILGKTFRSSVQE) are extracellular. Residues 426-446 (FCLLIFFMAIALVLFASGMYF) form a helical; Voltage-sensor membrane-spanning segment. Residues 447 to 458 (AEQGEPNSKFTS) lie on the Cytoplasmic side of the membrane. The chain crosses the membrane as a helical span at residues 459–479 (IPASFWFVLVTMTTVGYGDLV). The Extracellular segment spans residues 480-486 (PLSPFGK). Residues 487–507 (VVGGMCAMIGVLTLALPVPII) traverse the membrane as a helical segment. Residues 508–536 (VANFKHFYRQENRLASMKSKGDDADDDIA) lie on the Cytoplasmic side of the membrane.

This sequence belongs to the potassium channel family. A (Shaker) (TC 1.A.1.2) subfamily. Shaker sub-subfamily. Expressed in a variety of interneurons and sensory neurons, as well as body wall muscle.

The protein localises to the membrane. Functionally, mediates the voltage-dependent potassium ion permeability of excitable membranes. Has an important role in repolarization and in regulating the pattern of action potential firing. Isoform a expresses currents in a more depolarized voltage range than isoform d. This is Potassium voltage-gated channel protein shk-1 from Caenorhabditis elegans.